Consider the following 109-residue polypeptide: Nucleoid-associated protein PM0205 (109 aa).

Belongs to the YbaB/EbfC family. As to quaternary structure, homodimer.

Its subcellular location is the cytoplasm. The protein resides in the nucleoid. In terms of biological role, binds to DNA and alters its conformation. May be involved in regulation of gene expression, nucleoid organization and DNA protection. This is Nucleoid-associated protein PM0205 from Pasteurella multocida (strain Pm70).